The sequence spans 652 residues: Protein phosphatase Slingshot homolog 3 (652 aa).

A compositionally biased stretch (polar residues) spans 1–16 (MALVTVSRSPPASGHS). Residues 1–31 (MALVTVSRSPPASGHSTPVGPTDRVIRRRGR) form a disordered region. Alanine 2 is modified (N-acetylalanine). 4 positions are modified to phosphoserine: serine 9, serine 37, serine 85, and serine 87. The disordered stretch occupies residues 43 to 91 (GAVLGLQDGGEGNDAAEADPEPMEKPSGEEQPAEDQTDNGQGSQSPWKQ). Over residues 80-90 (DNGQGSQSPWK) the composition is skewed to polar residues. Positions 266–321 (EQMEQAILAELWQVLDASDLDSVTSKEIRQALELRLGCPLQQYRDFIDNQMLLLMA) constitute a DEK-C domain. The 142-residue stretch at 325 to 466 (RASRIFPHLY…LQTYQGILTA (142 aa)) folds into the Tyrosine-protein phosphatase domain. Cysteine 410 (phosphocysteine intermediate) is an active-site residue. Disordered stretches follow at residues 484–526 (EPLA…LGLR), 540–580 (LLEP…KGGQ), and 610–652 (RAFQ…EGKA). Over residues 540-552 (LLEPSSEPESTTE) the composition is skewed to low complexity. Positions 642-652 (SVDDSREEGKA) are enriched in basic and acidic residues.

The protein belongs to the protein-tyrosine phosphatase family. As to quaternary structure, does not bind to, or colocalize with, filamentous actin.

The protein localises to the cytoplasm. It localises to the cytoskeleton. The protein resides in the nucleus. It carries out the reaction O-phospho-L-tyrosyl-[protein] + H2O = L-tyrosyl-[protein] + phosphate. The catalysed reaction is O-phospho-L-seryl-[protein] + H2O = L-seryl-[protein] + phosphate. The enzyme catalyses O-phospho-L-threonyl-[protein] + H2O = L-threonyl-[protein] + phosphate. Functionally, protein phosphatase which may play a role in the regulation of actin filament dynamics. Can dephosphorylate and activate the actin binding/depolymerizing factor cofilin, which subsequently binds to actin filaments and stimulates their disassembly. The protein is Protein phosphatase Slingshot homolog 3 (Ssh3) of Rattus norvegicus (Rat).